We begin with the raw amino-acid sequence, 677 residues long: Multicopper oxidase GIP1 (677 aa).

Positions 1–23 (MLTSPRLILLLLAWVFSALVASA) are cleaved as a signal peptide. 2 consecutive Plastocyanin-like domains span residues 31-150 (ITWE…IRRK) and 179-379 (LVMV…RYKG). An N-linked (GlcNAc...) asparagine glycan is attached at Asn-76. Cu cation contacts are provided by His-80, His-82, His-130, and His-132. Residues Asn-228, Asn-283, Asn-396, and Asn-478 are each glycosylated (N-linked (GlcNAc...) asparagine). Residues 469–588 (DEGLVIRTKN…AGGMAIAILD (120 aa)) form the Plastocyanin-like 3 domain. Residue His-503 coordinates Cu cation. The N-linked (GlcNAc...) asparagine glycan is linked to Asn-520. The interval 629–651 (PLLAVSPSGGPKKDSGETSASDS) is disordered.

This sequence belongs to the multicopper oxidase family. In terms of assembly, might be part of an extracellular enzyme complex composed of GIP1, aurF, aurO and aurS.

It is found in the secreted. The protein resides in the extracellular space. Its pathway is pigment biosynthesis. Its function is as follows. Multicopper oxidase; part of the gene cluster that mediates the biosynthesis of aurofusarin, a red mycelium pigment which is acting as a mycotoxin. The first step is performed by the polyketide synthase which condenses one acetyl-CoA and 6 malonyl-CoA units to form the first intermediate, the cyclic heptaketide and yellow pigment YWA1. The C2 hydroxyl group in the pyrone ring of YWA1 is probably formed during ring closure by an aldol-type cyclization reaction. The dehydratase aurZ then acts as the first tailoring enzyme in the aurofusarin biosynthetic pathway by converting YWA1 to nor-rubrofusarin. Nor-rubrofusarin is then methylated to rubrofusarin by the O-methyltransferase aurJ. Rubrofusarin is then transported across the plasma membrane by the rubrofusarin-specific pump aurT for further enzymatic processing by the extracellular complex composed of GIP1, aurF, aurO and aurS to yield aurofusarin. The chain is Multicopper oxidase GIP1 from Gibberella zeae (strain ATCC MYA-4620 / CBS 123657 / FGSC 9075 / NRRL 31084 / PH-1) (Wheat head blight fungus).